The chain runs to 586 residues: CTP synthase (586 aa).

The interval 1–265 (MVRFIFVTGG…ENKVLNFFNI (265 aa)) is amidoligase domain. S13 is a binding site for CTP. A UTP-binding site is contributed by S13. ATP is bound by residues 14–19 (SLGKGI) and D71. Mg(2+) contacts are provided by D71 and E139. CTP is bound by residues 146 to 148 (DIE), 186 to 191 (KTKPTQ), and K222. Residues 186–191 (KTKPTQ) and K222 contribute to the UTP site. One can recognise a Glutamine amidotransferase type-1 domain in the interval 290–582 (KIAIITKYHK…IKATIEYNKS (293 aa)). G352 is a binding site for L-glutamine. C379 acts as the Nucleophile; for glutamine hydrolysis in catalysis. L-glutamine-binding positions include 380-383 (FGMQ) and E403. Positions 429–473 (AHISKCTYSEAFECDASTVYTNIHEDSNNLSTDKLQIETNFRNMS) constitute an RPE1 insert domain. R510 contacts L-glutamine. Active-site residues include H555 and E557.

This sequence belongs to the CTP synthase family. In terms of assembly, homotetramer.

The enzyme catalyses UTP + L-glutamine + ATP + H2O = CTP + L-glutamate + ADP + phosphate + 2 H(+). It carries out the reaction L-glutamine + H2O = L-glutamate + NH4(+). It catalyses the reaction UTP + NH4(+) + ATP = CTP + ADP + phosphate + 2 H(+). The protein operates within pyrimidine metabolism; CTP biosynthesis via de novo pathway; CTP from UDP: step 2/2. Its activity is regulated as follows. Allosterically activated by GTP, when glutamine is the substrate; GTP has no effect on the reaction when ammonia is the substrate. The allosteric effector GTP functions by stabilizing the protein conformation that binds the tetrahedral intermediate(s) formed during glutamine hydrolysis. Inhibited by the product CTP, via allosteric rather than competitive inhibition. Catalyzes the ATP-dependent amination of UTP to CTP with either L-glutamine or ammonia as the source of nitrogen. Regulates intracellular CTP levels through interactions with the four ribonucleotide triphosphates. The polypeptide is CTP synthase (Rickettsia prowazekii (strain Madrid E)).